A 468-amino-acid polypeptide reads, in one-letter code: ATP synthase subunit beta (468 aa).

148–155 (GGAGVGKT) contacts ATP.

Belongs to the ATPase alpha/beta chains family. In terms of assembly, F-type ATPases have 2 components, CF(1) - the catalytic core - and CF(0) - the membrane proton channel. CF(1) has five subunits: alpha(3), beta(3), gamma(1), delta(1), epsilon(1). CF(0) has three main subunits: a(1), b(2) and c(9-12). The alpha and beta chains form an alternating ring which encloses part of the gamma chain. CF(1) is attached to CF(0) by a central stalk formed by the gamma and epsilon chains, while a peripheral stalk is formed by the delta and b chains.

The protein resides in the cell inner membrane. The enzyme catalyses ATP + H2O + 4 H(+)(in) = ADP + phosphate + 5 H(+)(out). In terms of biological role, produces ATP from ADP in the presence of a proton gradient across the membrane. The catalytic sites are hosted primarily by the beta subunits. The sequence is that of ATP synthase subunit beta from Stenotrophomonas maltophilia (strain R551-3).